Reading from the N-terminus, the 624-residue chain is ADP,ATP carrier protein 1, chloroplastic (624 aa).

The N-terminal 79 residues, 1–79, are a transit peptide targeting the chloroplast; the sequence is MEAVIQTRGL…KERSTEFICK (79 aa). A80 carries the N-acetylalanine modification. The next 6 membrane-spanning stretches (helical) occupy residues 108-128, 182-202, 240-260, 315-335, 446-466, and 545-565; these read VEVA…CILF, ALFY…GFVM, LFYV…FWGF, AMMS…WWVN, LLTG…APLV, and LANS…AWLA. The interval 579 to 624 is disordered; the sequence is SEEELEKEMERASSVKIPVVSQDESGNGSLGESPSSSPEKSAPTNL. Low complexity predominate over residues 602–624; that stretch reads ESGNGSLGESPSSSPEKSAPTNL.

Belongs to the ADP/ATP translocase tlc (TC 2.A.12.2) family.

It localises to the plastid. It is found in the chloroplast membrane. In terms of biological role, may function as an ATP importer. The sequence is that of ADP,ATP carrier protein 1, chloroplastic (AATP1) from Arabidopsis thaliana (Mouse-ear cress).